Reading from the N-terminus, the 384-residue chain is Probable fructokinase-6, chloroplastic (384 aa).

The N-terminal 46 residues, 1 to 46, are a transit peptide targeting the chloroplast; sequence MALQATTTTFCFSGPTFRSTPHSLTSKRPISIKATTSSPSRLSNSR. Positions 34–61 are disordered; that stretch reads ATTSSPSRLSNSRSNLKGRALSSDGSTQ. Positions 35-48 are enriched in low complexity; sequence TTSSPSRLSNSRSN.

The protein belongs to the carbohydrate kinase PfkB family.

It localises to the plastid. The protein resides in the chloroplast. It carries out the reaction D-fructose + ATP = D-fructose 6-phosphate + ADP + H(+). The protein operates within glycan biosynthesis; starch biosynthesis. In terms of biological role, may play an important role in maintaining the flux of carbon towards starch formation. The polypeptide is Probable fructokinase-6, chloroplastic (Arabidopsis thaliana (Mouse-ear cress)).